A 383-amino-acid polypeptide reads, in one-letter code: 2-methylcitrate synthase 2 (383 aa).

The substrate site is built by Arg73 and His195. Residue His230 is part of the active site. CoA is bound at residue 263–267; that stretch reads VVMGF. His269 is an active-site residue. Position 278 (Arg278) interacts with substrate. Asp320 is an active-site residue. The substrate site is built by Arg345 and Arg364.

The protein belongs to the citrate synthase family. As to quaternary structure, homodimer.

The catalysed reaction is propanoyl-CoA + oxaloacetate + H2O = (2S,3S)-2-methylcitrate + CoA + H(+). It carries out the reaction oxaloacetate + acetyl-CoA + H2O = citrate + CoA + H(+). It participates in organic acid metabolism; propanoate degradation. It functions in the pathway carbohydrate metabolism; tricarboxylic acid cycle; isocitrate from oxaloacetate: step 1/2. Functionally, involved in the catabolism of short chain fatty acids (SCFA) via the tricarboxylic acid (TCA)(acetyl degradation route) and via the 2-methylcitrate cycle I (propionate degradation route). Catalyzes the Claisen condensation of propionyl-CoA and oxaloacetate (OAA) to yield 2-methylcitrate (2-MC) and CoA. Also catalyzes the condensation of oxaloacetate with acetyl-CoA but with a lower specificity. This is 2-methylcitrate synthase 2 (prpC2) from Corynebacterium glutamicum (strain ATCC 13032 / DSM 20300 / JCM 1318 / BCRC 11384 / CCUG 27702 / LMG 3730 / NBRC 12168 / NCIMB 10025 / NRRL B-2784 / 534).